Here is a 308-residue protein sequence, read N- to C-terminus: MKIIYAGTPDFAVPALRALIQSSHEVSLVLTQPDRPAGRGLKLKPSPVKSLALEHGIPLLQPETLKDEAVQARIAAEHADALVVAAYGLIIPATVLSMPRYGCYNIHASLLPRWRGAAPIQRALLAGDKETGVTIMEVVPALDAGAMILRGTLPITEHDTAQTLHDGLAEIGAELMLQAMDKLEREGRLEAEPQDESLVTYAQKLQKAEAVIDWRKNADELSRQVRAFNPFPVAHSTLKGETCRIWMAQAVSGTAEPGMIASVDNGILVGCGRGLLRIDELQLPGGKRLQAKDFLAGNPLCPGDRFGS.

A (6S)-5,6,7,8-tetrahydrofolate-binding site is contributed by 109 to 112 (SLLP).

The protein belongs to the Fmt family.

It catalyses the reaction L-methionyl-tRNA(fMet) + (6R)-10-formyltetrahydrofolate = N-formyl-L-methionyl-tRNA(fMet) + (6S)-5,6,7,8-tetrahydrofolate + H(+). Attaches a formyl group to the free amino group of methionyl-tRNA(fMet). The formyl group appears to play a dual role in the initiator identity of N-formylmethionyl-tRNA by promoting its recognition by IF2 and preventing the misappropriation of this tRNA by the elongation apparatus. The sequence is that of Methionyl-tRNA formyltransferase from Methylobacillus flagellatus (strain ATCC 51484 / DSM 6875 / VKM B-1610 / KT).